The following is a 110-amino-acid chain: UPF0060 membrane protein Pcryo_1341 (110 aa).

The next 4 helical transmembrane spans lie at 7–27, 33–53, 63–83, and 87–107; these read VGLF…PYLW, SIWL…LLTL, AAYG…VDGI, and TWDI…MFAP.

The protein belongs to the UPF0060 family.

The protein resides in the cell inner membrane. The chain is UPF0060 membrane protein Pcryo_1341 from Psychrobacter cryohalolentis (strain ATCC BAA-1226 / DSM 17306 / VKM B-2378 / K5).